The chain runs to 454 residues: tRNA modification GTPase MnmE (454 aa).

(6S)-5-formyl-5,6,7,8-tetrahydrofolate contacts are provided by Arg-23, Glu-80, and Lys-120. The TrmE-type G domain maps to 216–377 (GMKVVIAGRP…LRNHLKQSMG (162 aa)). Asn-226 contacts K(+). GTP is bound by residues 226-231 (NAGKSS), 245-251 (TDIAGTT), 270-273 (DTAG), 335-338 (NKAD), and 358-360 (SAR). Ser-230 lines the Mg(2+) pocket. The K(+) site is built by Thr-245, Ile-247, and Thr-250. Mg(2+) is bound at residue Thr-251. Lys-454 is a binding site for (6S)-5-formyl-5,6,7,8-tetrahydrofolate.

Belongs to the TRAFAC class TrmE-Era-EngA-EngB-Septin-like GTPase superfamily. TrmE GTPase family. As to quaternary structure, homodimer. Heterotetramer of two MnmE and two MnmG subunits. K(+) serves as cofactor.

Its subcellular location is the cytoplasm. Exhibits a very high intrinsic GTPase hydrolysis rate. Involved in the addition of a carboxymethylaminomethyl (cmnm) group at the wobble position (U34) of certain tRNAs, forming tRNA-cmnm(5)s(2)U34. The polypeptide is tRNA modification GTPase MnmE (Salmonella arizonae (strain ATCC BAA-731 / CDC346-86 / RSK2980)).